Here is a 289-residue protein sequence, read N- to C-terminus: Urease accessory protein UreD (289 aa).

Belongs to the UreD family. UreD, UreF and UreG form a complex that acts as a GTP-hydrolysis-dependent molecular chaperone, activating the urease apoprotein by helping to assemble the nickel containing metallocenter of UreC. The UreE protein probably delivers the nickel.

The protein resides in the cytoplasm. Its function is as follows. Required for maturation of urease via the functional incorporation of the urease nickel metallocenter. The protein is Urease accessory protein UreD of Xanthobacter autotrophicus (strain ATCC BAA-1158 / Py2).